Here is a 443-residue protein sequence, read N- to C-terminus: UDP-N-acetylmuramate--L-alanine ligase (443 aa).

Glycine 110–serine 116 is an ATP binding site.

Belongs to the MurCDEF family.

It localises to the cytoplasm. It catalyses the reaction UDP-N-acetyl-alpha-D-muramate + L-alanine + ATP = UDP-N-acetyl-alpha-D-muramoyl-L-alanine + ADP + phosphate + H(+). The protein operates within cell wall biogenesis; peptidoglycan biosynthesis. Functionally, cell wall formation. This chain is UDP-N-acetylmuramate--L-alanine ligase, found in Streptococcus equi subsp. zooepidemicus (strain H70).